A 229-amino-acid polypeptide reads, in one-letter code: Cytidylate kinase (229 aa).

7–15 (GPAGAGKSS) provides a ligand contact to ATP.

This sequence belongs to the cytidylate kinase family. Type 1 subfamily.

Its subcellular location is the cytoplasm. It carries out the reaction CMP + ATP = CDP + ADP. It catalyses the reaction dCMP + ATP = dCDP + ADP. This chain is Cytidylate kinase, found in Rhodopirellula baltica (strain DSM 10527 / NCIMB 13988 / SH1).